The primary structure comprises 196 residues: Ribonuclease HII (196 aa).

Positions 4–196 (IWVCGVDEAG…PVRRVLEGSF (193 aa)) constitute an RNase H type-2 domain. A divalent metal cation is bound by residues Asp10, Glu11, and Asp106.

The protein belongs to the RNase HII family. Mn(2+) serves as cofactor. Mg(2+) is required as a cofactor.

It localises to the cytoplasm. It carries out the reaction Endonucleolytic cleavage to 5'-phosphomonoester.. Functionally, endonuclease that specifically degrades the RNA of RNA-DNA hybrids. The protein is Ribonuclease HII of Polynucleobacter asymbioticus (strain DSM 18221 / CIP 109841 / QLW-P1DMWA-1) (Polynucleobacter necessarius subsp. asymbioticus).